We begin with the raw amino-acid sequence, 387 residues long: 3-ketoacyl-CoA thiolase (387 aa).

Cys-91 acts as the Acyl-thioester intermediate in catalysis. Catalysis depends on proton acceptor residues His-343 and Cys-373.

It belongs to the thiolase-like superfamily. Thiolase family. Heterotetramer of two alpha chains (FadB) and two beta chains (FadA).

It localises to the cytoplasm. The catalysed reaction is an acyl-CoA + acetyl-CoA = a 3-oxoacyl-CoA + CoA. It functions in the pathway lipid metabolism; fatty acid beta-oxidation. In terms of biological role, catalyzes the final step of fatty acid oxidation in which acetyl-CoA is released and the CoA ester of a fatty acid two carbons shorter is formed. The chain is 3-ketoacyl-CoA thiolase from Yersinia enterocolitica serotype O:8 / biotype 1B (strain NCTC 13174 / 8081).